The chain runs to 275 residues: Rhamnulose-1-phosphate aldolase (275 aa).

Glutamate 117 is a catalytic residue. Residues histidine 141, histidine 143, and histidine 212 each contribute to the Zn(2+) site.

It belongs to the aldolase class II family. RhaD subfamily. As to quaternary structure, homotetramer. Zn(2+) serves as cofactor.

It localises to the cytoplasm. The catalysed reaction is L-rhamnulose 1-phosphate = (S)-lactaldehyde + dihydroxyacetone phosphate. It functions in the pathway carbohydrate degradation; L-rhamnose degradation; glycerone phosphate from L-rhamnose: step 3/3. Its function is as follows. Catalyzes the reversible cleavage of L-rhamnulose-1-phosphate to dihydroxyacetone phosphate (DHAP) and L-lactaldehyde. In Citrobacter koseri (strain ATCC BAA-895 / CDC 4225-83 / SGSC4696), this protein is Rhamnulose-1-phosphate aldolase.